The chain runs to 390 residues: Chalcone synthase (390 aa).

Residue cysteine 164 is part of the active site.

This sequence belongs to the thiolase-like superfamily. Chalcone/stilbene synthases family.

It catalyses the reaction (E)-4-coumaroyl-CoA + 3 malonyl-CoA + 3 H(+) = 2',4,4',6'-tetrahydroxychalcone + 3 CO2 + 4 CoA. It functions in the pathway secondary metabolite biosynthesis; flavonoid biosynthesis. Its function is as follows. The primary product of this enzyme is 4,2',4',6'-tetrahydroxychalcone (also termed naringenin-chalcone or chalcone) which can under specific conditions spontaneously isomerize into naringenin. This chain is Chalcone synthase (CHS), found in Onobrychis viciifolia (Common sainfoin).